Consider the following 583-residue polypeptide: Complement factor I (583 aa).

An N-terminal signal peptide occupies residues 1-18; it reads MKLLHVFLLFLCFHLSFC. Cystine bridges form between cysteine 33/cysteine 255, cysteine 43/cysteine 54, cysteine 48/cysteine 59, cysteine 61/cysteine 93, cysteine 67/cysteine 86, cysteine 75/cysteine 106, cysteine 141/cysteine 181, cysteine 154/cysteine 214, cysteine 186/cysteine 196, cysteine 229/cysteine 247, cysteine 259/cysteine 271, cysteine 266/cysteine 284, cysteine 278/cysteine 293, cysteine 327/cysteine 453, cysteine 365/cysteine 381, and cysteine 373/cysteine 444. Positions 55-108 constitute a Kazal-like domain; that stretch reads IEGTCICKLPYQCPKNGTTVCATNGRSFPTYCQQKSLECLRPGTKFLNNGTCTA. Residues asparagine 70, asparagine 103, asparagine 173, and asparagine 177 are each glycosylated (N-linked (GlcNAc...) asparagine). In terms of domain architecture, SRCR spans 114-212; it reads VSLKHGNTDS…TMGYQDLADV (99 aa). LDL-receptor class A domains follow at residues 213–257 and 258–294; these read VCYT…LCCK and ACQGKSFHCKSGVCIPSQYRCNGEVDCITGEDEVGCE. Lysine 239, aspartate 242, isoleucine 244, aspartate 246, aspartate 252, and glutamate 253 together coordinate Ca(2+). Positions 276, 279, 281, 283, 289, and 290 each coordinate Ca(2+). In terms of domain architecture, Peptidase S1 spans 340–574; it reads IVGGKRAQLG…YFDWISYHVG (235 aa). Residues histidine 380 and aspartate 429 each act as charge relay system in the active site. Residues asparagine 464 and asparagine 494 are each glycosylated (N-linked (GlcNAc...) asparagine). 3 cysteine pairs are disulfide-bonded: cysteine 467-cysteine 531, cysteine 495-cysteine 510, and cysteine 521-cysteine 550. The active-site Charge relay system is the serine 525. N-linked (GlcNAc...) asparagine glycosylation occurs at asparagine 536.

This sequence belongs to the peptidase S1 family. Heterodimer of a light and heavy chains; disulfide-linked. The fully processed and mature protein circulates as a zymogen, and is allosterically activated by substrate-induced remodeling of the active site. As to expression, plasma.

The protein localises to the secreted. It localises to the extracellular space. The catalysed reaction is Inactivates complement subcomponents C3b, iC3b and C4b by proteolytic cleavage.. In terms of biological role, responsible for cleaving the alpha-chains of C4b and C3b in the presence of the cofactors C4-binding protein and factor H respectively. This is Complement factor I (CFI) from Pongo abelii (Sumatran orangutan).